Consider the following 765-residue polypeptide: Probable dipeptidyl peptidase 4 (765 aa).

Residues 1–14 (MKWSILLLVGCAAA) form the signal peptide. Residues asparagine 35, asparagine 78, asparagine 101, asparagine 110, asparagine 169, asparagine 218, asparagine 465, and asparagine 490 are each glycosylated (N-linked (GlcNAc...) asparagine). Catalysis depends on serine 613, which acts as the Charge relay system. Residue asparagine 665 is glycosylated (N-linked (GlcNAc...) asparagine). Residues aspartate 690 and histidine 725 each act as charge relay system in the active site.

Belongs to the peptidase S9B family.

It is found in the secreted. It catalyses the reaction Release of an N-terminal dipeptide, Xaa-Yaa-|-Zaa-, from a polypeptide, preferentially when Yaa is Pro, provided Zaa is neither Pro nor hydroxyproline.. Extracellular dipeptidyl-peptidase which removes N-terminal dipeptides sequentially from polypeptides having unsubstituted N-termini provided that the penultimate residue is proline. The polypeptide is Probable dipeptidyl peptidase 4 (dpp4) (Neosartorya fischeri (strain ATCC 1020 / DSM 3700 / CBS 544.65 / FGSC A1164 / JCM 1740 / NRRL 181 / WB 181) (Aspergillus fischerianus)).